The primary structure comprises 566 residues: Arginine--tRNA ligase (566 aa).

The 'HIGH' region signature appears at 121 to 131 (PNIAKPMSMGH).

The protein belongs to the class-I aminoacyl-tRNA synthetase family. In terms of assembly, monomer.

The protein resides in the cytoplasm. It catalyses the reaction tRNA(Arg) + L-arginine + ATP = L-arginyl-tRNA(Arg) + AMP + diphosphate. The sequence is that of Arginine--tRNA ligase from Oenococcus oeni (strain ATCC BAA-331 / PSU-1).